A 74-amino-acid polypeptide reads, in one-letter code: Protein kish-B (74 aa).

The N-terminal stretch at 1–22 is a signal peptide; that stretch reads MTNVYSLDGILVFGLLFVCTCA. Residues 23 to 52 lie on the Extracellular side of the membrane; that stretch reads YFKKVPRLKTWLLSEKKGVWGVFYKAAVIG. Residues 53-73 traverse the membrane as a helical segment; the sequence is TRLHAAVAIACVVMAFYVLFI. Residue lysine 74 is a topological domain, cytoplasmic.

The protein belongs to the KISH family.

It is found in the golgi apparatus membrane. In terms of biological role, involved in the early part of the secretory pathway. The chain is Protein kish-B (TMEM167B) from Homo sapiens (Human).